The primary structure comprises 79 residues: Conotoxin ArMSGL-0122 (79 aa).

The signal sequence occupies residues 1 to 20 (MSRLGIMVLTLLLLVFIVTS). The propeptide occupies 21–44 (HQDAGEKQATQRAAINFRWKRSLT). Cystine bridges form between cysteine 52–cysteine 64, cysteine 56–cysteine 73, and cysteine 63–cysteine 77. At leucine 78 the chain carries Leucine amide.

This sequence belongs to the conotoxin O3 superfamily. Expressed by the venom duct.

It localises to the secreted. The polypeptide is Conotoxin ArMSGL-0122 (Conus arenatus (Sand-dusted cone)).